We begin with the raw amino-acid sequence, 494 residues long: MTSYLSNDTEAKLKKTKELPPHIHFIGIGGIGMSALAMILAQKGYSISGSDQKKNLTLKKLEENKVHIFPTQVESNIDEILKVHGKNILVVKSSAIHRDNLELCKAKKYNLKIKHRSEILAFLIEEKKSIIVSGSHGKTTTSTYITTLFSYANKSPTAIIGGIVPLYKSNYSFGKSEFLIAEADESDGSLVKFNPNIGLITNLELEHVDHYLDLEDLIETMKQFAQKCECLITNFDCDNLRANIHGSKWFSIQKIINIDFALIPKESNGCEIIAEYYEKEKFIDVIKIPVPGIHNLSNAAAAIAACRVAGILFKDIKKGIEKLKLPSRRFEFKGLWRNRLIVEDYAHHPSEIDAAISIASTIIETKHKLSKILPRRIVTIFQPHRYSRTKKFQKEFAKTLSQSDLVFITPIYSAGEDKIEGINNKSIGHELKKIKPNLEIYTPDNNQNLIKLIKEKTLENDLILIMGAGDINLISENLFLELLNNKLISNDIAA.

134–140 contributes to the ATP binding site; sequence GSHGKTT.

Belongs to the MurCDEF family.

The protein resides in the cytoplasm. The catalysed reaction is UDP-N-acetyl-alpha-D-muramate + L-alanine + ATP = UDP-N-acetyl-alpha-D-muramoyl-L-alanine + ADP + phosphate + H(+). The protein operates within cell wall biogenesis; peptidoglycan biosynthesis. Functionally, cell wall formation. This is UDP-N-acetylmuramate--L-alanine ligase from Prochlorococcus marinus (strain NATL1A).